A 349-amino-acid chain; its full sequence is MLGLGTLFLLLAACPASRADPVPALPDIQVQENFNESRIYGKWFNLAVGSTCPWLSRIKNKMSMSTLVLREGATGAEISTTSTRWRRGVCEEVSGTYEKTDMDGKFLYHKSKWNVTLESYVVHTNYDEYAIFLTKKFSRHHGPTITAKLYGREPQLRDSLLQEFREVALSVGIPENSIVFMEDRGECVPGDLEQKSTSLLRARRAVLPQENEGSGTGPLVTDVLKKEDSCQLSYSEGPCLGMIEKYYYNGASMACETFHYGGCLGNGNNFNSEKECLQTCRTVAACSLPIVQGPCRAYVELWAFDAAQGKCVQFSYGGCKGNGNKFYSEKECKEYCGVPGDGYEELTRS.

An N-terminal signal peptide occupies residues 1–19 (MLGLGTLFLLLAACPASRA). N-linked (GlcNAc...) asparagine glycosylation is present at Asn-35. Residues Cys-52 and Lys-110 each coordinate 3-hydroxy-L-kynurenine. An intrachain disulfide couples Cys-90 to Cys-187. A glycan (N-linked (GlcNAc...) asparagine) is linked at Asn-114. 3-hydroxy-L-kynurenine contacts are provided by Lys-136 and Lys-148. Residue Ser-214 is glycosylated (O-linked (Xyl...) (chondroitin sulfate) serine). Disulfide bonds link Cys-230-Cys-280, Cys-239-Cys-263, Cys-255-Cys-276, Cys-286-Cys-336, Cys-295-Cys-319, and Cys-311-Cys-332. 2 BPTI/Kunitz inhibitor domains span residues 230-280 (CQLS…LQTC) and 286-336 (CSLP…KEYC).

In the N-terminal section; belongs to the calycin superfamily. Lipocalin family. Monomer. Homodimer. In plasma, it occurs as a monomer or dimer and in covalently-linked complexes with immunoglobulin A (IgA), ALB/albumin and F2/prothrombin. Chromophore-bound alpha-1-microglobulin interacts with the constant region of immunoglobulin A. Chromophore-bound alpha-1-microglobulin interacts with ALB with molar ratio 2:1 and 1:1; this interaction does not prevent fatty acid binding to ALB. Interacts with F2/prothrombin (via N-terminus) with molar ratio 2:1 and 1:1; this interaction does not prevent the activation of prothrombin to thrombin. Interacts with NDUFAB1, a subunit of mitochondrial complex I. Interacts with FN1. As to quaternary structure, I-alpha-I plasma protease inhibitors are assembled from one or two heavy chains (HC) and one light chain, bikunin. Inter-alpha-inhibitor (I-alpha-I) is composed of ITIH1/HC1, ITIH2/HC2 and bikunin, and pre-alpha-inhibitor (P-alpha-I) of ITIH3/HC3 and bikunin. Interacts with TNFAIP6 (via Link domain). In terms of assembly, monomer. Also occurs as a complex with tryptase in mast cells. In terms of processing, the precursor is proteolytically processed into separately functioning proteins. 3-hydroxykynurenine, an oxidized tryptophan metabolite that is common in biological fluids, reacts with Cys-53, Lys-111, Lys-137, and Lys-149 to form heterogeneous polycyclic chromophores including hydroxanthommatin. The reaction by alpha-1-microglobulin is autocatalytic; the human protein forms chromophore even when expressed in insect and bacterial cells. The chromophore can react with accessible cysteines forming non-reducible thioether cross-links with other molecules of alpha-1-microglobulin or with other proteins such as Ig alpha-1 chain C region 'Cys-352'. Post-translationally, heavy chains are interlinked with bikunin via a chondroitin 4-sulfate bridge to the C-terminal aspartate. In terms of processing, proteolytically cleaved by PRSS3 at Kunitz domain 2. Expressed by the liver and secreted in plasma.

It is found in the secreted. It localises to the endoplasmic reticulum. The protein resides in the cytoplasm. The protein localises to the cytosol. Its subcellular location is the cell membrane. It is found in the nucleus membrane. It localises to the mitochondrion inner membrane. The protein resides in the extracellular space. The protein localises to the extracellular matrix. Functionally, antioxidant and tissue repair protein with reductase, heme-binding and radical-scavenging activities. Removes and protects against harmful oxidants and repairs macromolecules in intravascular and extravascular spaces and in intracellular compartments. Intravascularly, plays a regulatory role in red cell homeostasis by preventing heme- and reactive oxygen species-induced cell damage. Binds and degrades free heme to protect fetal and adult red blood cells from hemolysis. Reduces extracellular methemoglobin, a Fe3+ (ferric) form of hemoglobin that cannot bind oxygen, back to the Fe2+ (ferrous) form deoxyhemoglobin, which has oxygen-carrying potential. Upon acute inflammation, inhibits oxidation of low-density lipoprotein particles by MPO and limits vascular damage. Extravascularly, protects from oxidation products formed on extracellular matrix structures and cell membranes. Catalyzes the reduction of carbonyl groups on oxidized collagen fibers and preserves cellular and extracellular matrix ultrastructures. Importantly, counteracts the oxidative damage at blood-placenta interface, preventing leakage of free fetal hemoglobin into the maternal circulation. Intracellularly, has a role in maintaining mitochondrial redox homeostasis. Bound to complex I of the respiratory chain of mitochondria, may scavenge free radicals and preserve mitochondrial ATP synthesis. Protects renal tubule epithelial cells from heme-induced oxidative damage to mitochondria. Reduces cytochrome c from Fe3+ (ferric) to the Fe2+ (ferrous) state through formation of superoxide anion radicals in the presence of ascorbate or NADH/NADPH electron donor cofactors, ascorbate being the preferred cofactor. Has a chaperone role in facilitating the correct folding of bikunin in the endoplasmic reticulum compartment. In terms of biological role, kunitz-type serine protease inhibitor and structural component of extracellular matrix with a role in extracellular space remodeling and cell adhesion. Among others, has antiprotease activity toward kallikrein, a protease involved in airway inflammation; inhibits GZMK/granzyme, a granule-stored serine protease involved in NK and T cell cytotoxic responses; and inhibits PLG/plasmin, a protease required for activation of matrix metalloproteinases. As part of I-alpha-I complex, provides for the heavy chains to be transferred from I-alpha-I complex to hyaluronan in the presence of TNFAIP6, in a dynamic process that releases free bikunin and remodels extracellular matrix proteoglycan structures. Free bikunin, but not its heavy chain-bound form, acts as a potent protease inhibitor in airway secretions. Part of hyaluronan-rich extracellular matrix that surrounds oocyte during cumulus oophorus expansion, an indispensable process for proper ovulation. Also inhibits calcium oxalate crystallization. Kunitz-type serine protease inhibitor. Has high catalytic efficiency for F10/blood coagulation factor Xa and may act as an anticoagulant by inhibiting prothrombin activation. Inhibits trypsin and mast cell CMA1/chymase and tryptase proteases. The chain is Protein AMBP (AMBP) from Mesocricetus auratus (Golden hamster).